The sequence spans 188 residues: MKTAQEFRAGQVAMINGEPWVIQKAEFNKSGRNAAVVKMKLKNLLNGQATETVYKADDKFEPVILERKEVTYSYFADPMYVFMDNEFNQYEIEKDDLGDAYNFIEDGMQDVCEAVFYNDRVISIELPTTIVRQISYTEPAVRGDTSGKVMKVARLNSGYELRVAEFCDIGDYIEIDTRTFEYKSRAKA.

This sequence belongs to the elongation factor P family.

It localises to the cytoplasm. It functions in the pathway protein biosynthesis; polypeptide chain elongation. Its function is as follows. Involved in peptide bond synthesis. Stimulates efficient translation and peptide-bond synthesis on native or reconstituted 70S ribosomes in vitro. Probably functions indirectly by altering the affinity of the ribosome for aminoacyl-tRNA, thus increasing their reactivity as acceptors for peptidyl transferase. This is Elongation factor P from Azotobacter vinelandii (strain DJ / ATCC BAA-1303).